Consider the following 521-residue polypeptide: MTNIHTDKILILDFGAQYTQLIARRIREIGVYCEIWAWDHDPSEIAGFGAKGIILSGGPESTTLPGAPVAPQEVFDSGLPVFGICYGMQTLAAQLGGATEAADQREFGHAEVDVIAADALFAGLTDHAGAPRLNVWMSHGDHVSQVPPGFTITATTDRIPVAAMSNEDKRWYGVQFHPEVTHTLQGQTLLRRFVVDICGCQTLWTAANIIDDQIARVREQVGDDDVILGLSGGVDSSVVAALLHKAIGDKLTCVFVDTGLLRWQEGDQVMAMFAEHMGVKVIRVNAADRYFAKLEGVSDPEAKRKIIGNLFVEIFDEESNTLANAKWLAQGTIYPDVIESAGSKTGKAHVIKSHHNVGGLPQHMKLGLVEPLRELFKDEVRRLGVELGLPRTMVYRHPFPGPGLGVRILGEVKREYAELLAKADAIFIDELRKADLYDKISQAFAVFLPVKSVGVVGDARAYEWVIALRAVETIDFMTAHWAHLPYDFLGTVSNRIINELRGVSRVVYDISGKPPATIEWE.

Residues 8-203 form the Glutamine amidotransferase type-1 domain; sequence KILILDFGAQ…VVDICGCQTL (196 aa). The active-site Nucleophile is the cysteine 85. Active-site residues include histidine 177 and glutamate 179. The GMPS ATP-PPase domain maps to 204 to 396; that stretch reads WTAANIIDDQ…LGLPRTMVYR (193 aa). 231–237 contributes to the ATP binding site; the sequence is SGGVDSS.

In terms of assembly, homodimer.

The enzyme catalyses XMP + L-glutamine + ATP + H2O = GMP + L-glutamate + AMP + diphosphate + 2 H(+). Its pathway is purine metabolism; GMP biosynthesis; GMP from XMP (L-Gln route): step 1/1. In terms of biological role, catalyzes the synthesis of GMP from XMP. This chain is GMP synthase [glutamine-hydrolyzing], found in Xanthomonas oryzae pv. oryzae (strain PXO99A).